We begin with the raw amino-acid sequence, 341 residues long: Methionine import ATP-binding protein MetN (341 aa).

Residues 6–247 enclose the ABC transporter domain; it reads IEIKKLSKNF…PQHQATRHLL (242 aa). An ATP-binding site is contributed by 44–51; that stretch reads GMSGAGKS.

It belongs to the ABC transporter superfamily. Methionine importer (TC 3.A.1.24) family. The complex is composed of two ATP-binding proteins (MetN), two transmembrane proteins (MetI) and a solute-binding protein (MetQ).

It localises to the cell inner membrane. The catalysed reaction is L-methionine(out) + ATP + H2O = L-methionine(in) + ADP + phosphate + H(+). It catalyses the reaction D-methionine(out) + ATP + H2O = D-methionine(in) + ADP + phosphate + H(+). Part of the ABC transporter complex MetNIQ involved in methionine import. Responsible for energy coupling to the transport system. The chain is Methionine import ATP-binding protein MetN from Protochlamydia amoebophila (strain UWE25).